The sequence spans 388 residues: Succinate--CoA ligase [ADP-forming] subunit beta (388 aa).

Residues 9–245 (KALLKKYGVS…KSQENERELK (237 aa)) enclose the ATP-grasp domain. Residues Lys-46, 53–55 (GRG), Glu-100, Tyr-103, and Glu-108 contribute to the ATP site. Residues Asn-200 and Asp-214 each contribute to the Mg(2+) site. Substrate-binding positions include Asn-265 and 322–324 (GIV).

This sequence belongs to the succinate/malate CoA ligase beta subunit family. Heterotetramer of two alpha and two beta subunits. It depends on Mg(2+) as a cofactor.

It carries out the reaction succinate + ATP + CoA = succinyl-CoA + ADP + phosphate. The enzyme catalyses GTP + succinate + CoA = succinyl-CoA + GDP + phosphate. The protein operates within carbohydrate metabolism; tricarboxylic acid cycle; succinate from succinyl-CoA (ligase route): step 1/1. Its function is as follows. Succinyl-CoA synthetase functions in the citric acid cycle (TCA), coupling the hydrolysis of succinyl-CoA to the synthesis of either ATP or GTP and thus represents the only step of substrate-level phosphorylation in the TCA. The beta subunit provides nucleotide specificity of the enzyme and binds the substrate succinate, while the binding sites for coenzyme A and phosphate are found in the alpha subunit. In Acinetobacter baylyi (strain ATCC 33305 / BD413 / ADP1), this protein is Succinate--CoA ligase [ADP-forming] subunit beta.